The sequence spans 507 residues: Phosphoprotein (507 aa).

Serine 86 and serine 151 each carry phosphoserine. Residues 137 to 160 (DGVEVWGGDEESENSDVDSGEPDP) are compositionally biased toward acidic residues. Residues 137-307 (DGVEVWGGDE…QSNIEPEDDY (171 aa)) are disordered. Basic and acidic residues-rich tracts occupy residues 189–199 (EIQKLLEDQSR) and 222–233 (TASEKPIKKGTD). Low complexity-rich tracts occupy residues 236-252 (STSS…GGAT) and 266-278 (NASA…SASN). Residues 279-301 (VSPTQGSKTESGTTTSRISQSNI) show a composition bias toward polar residues. The interval 304-376 (EDDYDDELFS…LSSVMIAIPG (73 aa)) is multimerization. The segment at 459–507 (ASRSVIRSIIKSSHLGEDRKDYLMSLLNDIQGSKDLAQFHQMLVKILKN) is interaction with the nucleocapsid (N-RNA).

This sequence belongs to the morbillivirus P protein family. Homotetramer. Interacts (via multimerization domain) with polymerase L; this interaction forms the polymerase L-P complex. Interacts (via N-terminus) with N0 (via Ncore); this interaction allows P to chaperon N0 to avoid N polymerization before encapsidation. Interacts (via C-terminus) with N-RNA template; this interaction positions the polymerase on the template for both transcription and replication. Phosphorylation on serines by host CK2 is necessary for the formation of viral factories.

In terms of biological role, essential cofactor of the RNA polymerase L that plays a central role in the transcription and replication by forming the polymerase complex with RNA polymerase L and recruiting L to the genomic N-RNA template for RNA synthesis. Also plays a central role in the encapsidation of nascent RNA chains by forming the encapsidation complex with the nucleocapsid protein N (N-P complex). Acts as a chaperone for newly synthesized free N protein, so-called N0, allowing encapsidation of nascent RNA chains during replication. The nucleoprotein protein N prevents excessive phosphorylation of P, which leads to down-regulation of viral transcription/ replication. Participates, together with N, in the formation of viral factories (viroplasms), which are large inclusions in the host cytoplasm where replication takes place. This is Phosphoprotein (P/V) from Bos indicus (Zebu).